The primary structure comprises 651 residues: Lateral signaling target protein 2 (651 aa).

Positions 294–425 (VPEDSSSKLT…KENEEDVDEQ (132 aa)) are disordered. Positions 300-310 (SKLTMSDFRTN) are enriched in polar residues. Residues 345-363 (SEATSLASSGLTSPSSGSE) show a composition bias toward low complexity. The segment covering 373–394 (SDEELDDDVIETASSEENESDS) has biased composition (acidic residues). Residues 395–412 (NNENVEMVASSGDSSETE) show a composition bias toward low complexity. The FYVE-type zinc-finger motif lies at 557 to 617 (DEDCEQCTAC…VCNLCYVHRL (61 aa)). Residues Cys563, Cys566, Cys579, Cys582, Cys587, Cys590, Cys609, and Cys612 each coordinate Zn(2+).

It belongs to the lst-2 family.

Negative regulator of epidermal growth factor receptor (EGFR) signaling. The chain is Lateral signaling target protein 2 (lst-2) from Caenorhabditis briggsae.